A 300-amino-acid chain; its full sequence is Probable alpha-L-glutamate ligase (300 aa).

Positions 104-287 (LQLLARQGID…IAGRMIQWIE (184 aa)) constitute an ATP-grasp domain. ATP contacts are provided by residues K141, 178–179 (EY), D187, and 211–213 (RSN). Residues D248, E260, and N262 each contribute to the Mg(2+) site. Residues D248, E260, and N262 each coordinate Mn(2+).

Belongs to the RimK family. The cofactor is Mg(2+). It depends on Mn(2+) as a cofactor.

This is Probable alpha-L-glutamate ligase from Citrobacter koseri (strain ATCC BAA-895 / CDC 4225-83 / SGSC4696).